A 1292-amino-acid polypeptide reads, in one-letter code: Sorbin and SH3 domain-containing protein 1 (1292 aa).

4 disordered regions span residues 1 to 29 (MSSE…ATAD), 73 to 158 (LRAS…AQPE), 214 to 275 (HLQR…SSPL), and 318 to 381 (REQQ…MDEV). Over residues 74-89 (RASSSYRETPSSSPAS) the composition is skewed to low complexity. Thr-82 carries the phosphothreonine modification. Phosphoserine is present on residues Ser-86 and Ser-89. Over residues 93 to 102 (TRQHESKPGL) the composition is skewed to basic and acidic residues. Phosphoserine occurs at positions 105, 114, 137, 146, 242, and 259. A compositionally biased stretch (polar residues) spans 114–128 (LSSSADANGNAQPSS). Residues 240 to 252 (SFSPPPPLVPPAP) show a composition bias toward pro residues. Residues 266-275 (AVSSTDSSPL) show a composition bias toward polar residues. At Ser-341 the chain carries Phosphoserine. Thr-344 carries the phosphothreonine modification. Phosphoserine occurs at positions 346 and 350. The segment covering 354–365 (AIEKRAKDDSRR) has biased composition (basic and acidic residues). The 104-residue stretch at 366 to 469 (VVKSTQDLSD…YSPRYSFSED (104 aa)) folds into the SoHo domain. Phosphoserine is present on residues Ser-369, Ser-374, and Asn-387. The disordered stretch occupies residues 405-534 (LNRDTPEENP…TRKYRAEPKS (130 aa)). The segment covering 437–450 (YTPTYQFPASTPSP) has biased composition (polar residues). Ser-452, Ser-465, Asp-469, Ser-472, Arg-478, and Ser-481 each carry phosphoserine. The span at 510 to 534 (SSERNDWEPPDKKVDTRKYRAEPKS) shows a compositional bias: basic and acidic residues. A Phosphotyrosine; by ABL1 modification is found at Tyr-536. Phosphoserine is present on residues Ser-556, Asn-603, Ser-609, and Ser-640. Positions 628 to 650 (APSANVPQSSAISPTPEISSETP) are disordered. Tyr-654 carries the phosphotyrosine; by ABL1 modification. Phosphoserine occurs at positions 665 and 700. The segment at 692–716 (PLQGLSGLKRPSSSASTKDSESPRH) is disordered. The residue at position 708 (Thr-708) is a Phosphothreonine. Ser-713, Ile-730, Asp-735, and Ile-765 each carry phosphoserine. The 60-residue stretch at 793–852 (SEMRPARAKFDFKAQTLKELPLQKGDIVYIYKQIDQNWYEGEHHGRVGIFPRTYIELLPP) folds into the SH3 1 domain. Position 862 is a phosphothreonine (Thr-862). An SH3 2 domain is found at 867–928 (LEYGEAIAKF…PITYVDVIKR (62 aa)). At Val-923 the chain carries Phosphoserine. Tyr-937 bears the Phosphotyrosine mark. Low complexity predominate over residues 944–954 (SSPSRSATASP). Disordered regions lie at residues 944–976 (SSPS…SRRA), 1041–1064 (SDRP…TYSL), 1106–1150 (QLSD…KKSC), and 1162–1230 (TEQR…SQTS). Phosphoserine is present on residues Ser-945 and Ser-953. Over residues 955–971 (QFSSHSKLITPAPSSLP) the composition is skewed to polar residues. Residues 1106–1117 (QLSDAFSSQSKR) are compositionally biased toward polar residues. The segment covering 1119-1136 (PWREESGQYERKAERGAG) has biased composition (basic and acidic residues). Residues 1162-1172 (TEQRLSDLNTP) are compositionally biased toward polar residues. Residues 1192-1203 (QTERHRGGEQAG) are compositionally biased toward basic and acidic residues. Over residues 1211–1230 (GSQQPQAQQRRVTPDRSQTS) the composition is skewed to polar residues. Residue Gln-1213 is modified to Phosphoserine. In terms of domain architecture, SH3 3 spans 1231 to 1292 (QDLFSYQALY…PGNYVKPLYL (62 aa)). Tyr-1240 is modified (phosphotyrosine; by ABL1).

As to quaternary structure, interacts (via third SH3 domain) with the Ten-1 ICD form of TENM1; the interaction induces the translocation of SORBS1 to the nucleus. Interacts with INSM1. Interacts with the long isoform of AFDN and with VCL. AFDN and VCL bind to SORBS1 in a competitive manner and do not form a ternary complex. Interacts with ABL1, CBL, CBLB and INPPL1/SHIP2 through the third SH3 domain. Interaction with ABL1 occurs only after insulin stimulation while this has no effect on the interaction with INPPL1. Interacts with the insulin receptor but dissociates from it following insulin stimulation. Also interacts with SCA7, PTK2/FAK1 and flotillin. Interacts (via SH3 domain 2) with PXN. Post-translationally, O-glycosylated. In terms of tissue distribution, detected in skeletal muscle (at protein level). Widely expressed with highest levels in heart and skeletal muscle.

The protein resides in the cell junction. It is found in the adherens junction. The protein localises to the cell membrane. It localises to the cytoplasm. Its subcellular location is the cytoskeleton. The protein resides in the focal adhesion. It is found in the nucleus. The protein localises to the nucleus matrix. Plays a role in tyrosine phosphorylation of CBL by linking CBL to the insulin receptor. Required for insulin-stimulated glucose transport. Involved in formation of actin stress fibers and focal adhesions. This is Sorbin and SH3 domain-containing protein 1 from Homo sapiens (Human).